The chain runs to 346 residues: 3 beta-hydroxysteroid dehydrogenase/Delta 5--&gt;4-isomerase (346 aa).

Residue Tyr-147 is the Proton acceptor of the active site. Lys-151 is an NAD(+) binding site.

It belongs to the 3-beta-HSD family.

It catalyses the reaction a 3beta-hydroxy-Delta(5)-steroid + NAD(+) = a 3-oxo-Delta(5)-steroid + NADH + H(+). The enzyme catalyses a 3-oxo-Delta(5)-steroid = a 3-oxo-Delta(4)-steroid. Its pathway is lipid metabolism; steroid biosynthesis. Catalyzes the oxidative conversion of Delta(5)-ene-3-beta-hydroxy steroid, and the oxidative conversion of ketosteroids. The 3-beta-HSD enzymatic system plays a crucial role in the biosynthesis of all classes of hormonal steroids. During viral infection, steroid production contributes to virulence by inhibiting the host inflammatory response. The protein is 3 beta-hydroxysteroid dehydrogenase/Delta 5--&gt;4-isomerase (OPG174) of Homo sapiens (Human).